Consider the following 334-residue polypeptide: Putative fatty acid elongase 1 (334 aa).

Topologically, residues 1-51 (MDLTGAHMLKIHRPSIDHPFGVDLWHLFEQLSIKTIGWNPSEFEYIPGKTP) are lumenal. Residues 52-72 (MSQWSSVIVSITAYYVIILSG) form a helical membrane-spanning segment. Residues 73–86 (RAIMTNRKPLKQRR) lie on the Cytoplasmic side of the membrane. A helical membrane pass occupies residues 87–107 (LFQLHNFILTIISGALLALLV). The Lumenal segment spans residues 108–135 (EEVFRNYMRNGLFYCVCDSRHFTQRLVT). The chain crosses the membrane as a helical span at residues 136–156 (LYYLNYLTKYLELMDTVFLFL). The Cytoplasmic segment spans residues 157 to 160 (KKKP). A helical transmembrane segment spans residues 161–181 (LAFLHCYHHGITALLCFTQLL). At 182–187 (GRTSVQ) the chain is on the lumenal side. A helical membrane pass occupies residues 188–208 (WGVIGLNLYVHVIMYSYYFLA). The Cytoplasmic portion of the chain corresponds to 209-224 (ACGRRVWWKQWVTRVQ). Residues 225 to 245 (IIQFVLDLILCYFGTYSHIAF) traverse the membrane as a helical segment. Topologically, residues 246 to 260 (RYFPWLPHVGDCSGS) are lumenal. A helical transmembrane segment spans residues 261–281 (LFAAFFGCGVLSSYLFLFIGF). Topologically, residues 282–334 (YINTYIKRGAKKNQRKAAGKADNTSVAAAAGSEALAATTATNASPFSARSRKL) are cytoplasmic. A Phosphoserine modification is found at Ser-325.

The protein belongs to the ELO family.

Its subcellular location is the endoplasmic reticulum membrane. The enzyme catalyses a very-long-chain acyl-CoA + malonyl-CoA + H(+) = a very-long-chain 3-oxoacyl-CoA + CO2 + CoA. In terms of biological role, may be involved in the synthesis of very long chain fatty acids. This Schizosaccharomyces pombe (strain 972 / ATCC 24843) (Fission yeast) protein is Putative fatty acid elongase 1.